We begin with the raw amino-acid sequence, 330 residues long: GTP 3',8-cyclase (330 aa).

In terms of domain architecture, Radical SAM core spans R9–A225. R18 contributes to the GTP binding site. C25 and C29 together coordinate [4Fe-4S] cluster. Y31 contributes to the S-adenosyl-L-methionine binding site. C32 contributes to the [4Fe-4S] cluster binding site. R67 provides a ligand contact to GTP. An S-adenosyl-L-methionine-binding site is contributed by G71. T97 contacts GTP. S-adenosyl-L-methionine is bound at residue S121. K158 contributes to the GTP binding site. S-adenosyl-L-methionine is bound at residue M192. Residues C256 and C259 each contribute to the [4Fe-4S] cluster site. R261–R263 contributes to the GTP binding site. C273 lines the [4Fe-4S] cluster pocket.

The protein belongs to the radical SAM superfamily. MoaA family. Monomer and homodimer. [4Fe-4S] cluster is required as a cofactor.

It carries out the reaction GTP + AH2 + S-adenosyl-L-methionine = (8S)-3',8-cyclo-7,8-dihydroguanosine 5'-triphosphate + 5'-deoxyadenosine + L-methionine + A + H(+). It functions in the pathway cofactor biosynthesis; molybdopterin biosynthesis. Its function is as follows. Catalyzes the cyclization of GTP to (8S)-3',8-cyclo-7,8-dihydroguanosine 5'-triphosphate. This Marinobacter nauticus (strain ATCC 700491 / DSM 11845 / VT8) (Marinobacter aquaeolei) protein is GTP 3',8-cyclase.